The sequence spans 40 residues: Photosystem II reaction center protein J (40 aa).

The chain crosses the membrane as a helical span at residues isoleucine 8–phenylalanine 28.

The protein belongs to the PsbJ family. PSII is composed of 1 copy each of membrane proteins PsbA, PsbB, PsbC, PsbD, PsbE, PsbF, PsbH, PsbI, PsbJ, PsbK, PsbL, PsbM, PsbT, PsbX, PsbY, PsbZ, Psb30/Ycf12, at least 3 peripheral proteins of the oxygen-evolving complex and a large number of cofactors. It forms dimeric complexes.

It localises to the plastid. The protein localises to the chloroplast thylakoid membrane. One of the components of the core complex of photosystem II (PSII). PSII is a light-driven water:plastoquinone oxidoreductase that uses light energy to abstract electrons from H(2)O, generating O(2) and a proton gradient subsequently used for ATP formation. It consists of a core antenna complex that captures photons, and an electron transfer chain that converts photonic excitation into a charge separation. The sequence is that of Photosystem II reaction center protein J from Pinus koraiensis (Korean pine).